The following is a 276-amino-acid chain: Molybdenum storage protein subunit alpha (276 aa).

As to quaternary structure, octamer consisting of 4 alpha and 4 beta chains.

The protein localises to the cytoplasm. In terms of biological role, intracellular storage of molybdenum. Binds polyoxomolybdates. Can bind at least 90 molybdenum atoms per protein molecule. This Azotobacter vinelandii (strain DJ / ATCC BAA-1303) protein is Molybdenum storage protein subunit alpha.